We begin with the raw amino-acid sequence, 714 residues long: P-loop NTPase domain-containing protein LPA1 (714 aa).

Low complexity predominate over residues 1 to 11 (MPMPPQCASSK). Disordered regions lie at residues 1–42 (MPMP…PPPK), 259–293 (QKLD…PRTE), and 595–689 (FGSE…GSGN). The segment covering 271–285 (EGRDDTSDDKAHHGS) has biased composition (basic and acidic residues). A compositionally biased stretch (acidic residues) spans 595–617 (FGSEEDADDPPDAGTDEDLTDEE). Over residues 618 to 636 (RDMHEIEAGSVDEHSTKSD) the composition is skewed to basic and acidic residues. The segment covering 659–670 (AASSTKNSSNQE) has biased composition (polar residues).

Expressed in roots, leaf blade shoots, leaf sheath shoots and panicles.

Its function is as follows. Required for the accumulation of phytic acid in seeds. Phytic acid is the primary storage form of phosphorus in cereal grains and other plant seeds. In Oryza sativa subsp. japonica (Rice), this protein is P-loop NTPase domain-containing protein LPA1.